Reading from the N-terminus, the 347-residue chain is UDP-rhamnose/UDP-galactose transporter 1 (347 aa).

A run of 10 helical transmembrane segments spans residues 11–31 (AVSD…IIMA), 43–63 (FGFA…VGMV), 80–100 (LLWF…SLML), 103–123 (VGFY…LEWI), 132–152 (EVKA…VTDV), 159–179 (FICA…IGSL), 195–215 (APIQ…LLSG), 223–243 (MTYG…FCNI), 256–276 (SFQV…WLLF), and 285–305 (IAGM…VDIE).

The protein belongs to the TPT transporter family. TPT (TC 2.A.7.9) subfamily. Widely expressed in the whole plant.

Its subcellular location is the golgi apparatus membrane. Nucleotide-sugar transporter that transports UDP-rhamnose or UDP-galactose and UMP in a strict counter-exchange mode. In Arabidopsis thaliana (Mouse-ear cress), this protein is UDP-rhamnose/UDP-galactose transporter 1.